Consider the following 452-residue polypeptide: Lamina-associated polypeptide 2, isoform beta (452 aa).

The tract at residues 1 to 409 is nucleoplasmic; it reads MPEFLEDPSV…KSEKTKKGRS (409 aa). Positions 5-48 constitute an LEM-like domain; sequence LEDPSVLTKDKLKSELVANNVTLPAGEQRKDVYVQLYLQHLTAR. Disordered stretches follow at residues 48–113 and 149–264; these read RNRP…DVTE and REQG…VEPS. A linker region spans residues 49–107; that stretch reads NRPPLAAGANSKGPPDFSSDEEREPTPVLGSGASVGRGRGAVGRKATKKTDKPRPEDKD. Residues Ser66 and Ser67 each carry the phosphoserine modification. The residue at position 74 (Thr74) is a Phosphothreonine. Phosphoserine is present on Ser82. Arg85 and Arg87 each carry omega-N-methylarginine. Basic and acidic residues predominate over residues 96–105; sequence KKTDKPRPED. An LEM domain is found at 108-152; sequence DLDVTELSNEELLEQLVRYGVNPGPIVGTTRKLYEKKLLKLREQG. Residues 137 to 242 form an NAKAP95-binding N region; sequence TRKLYEKKLL…TSGSSKGGPL (106 aa). Polar residues predominate over residues 154–177; it reads ESRSSTPLPTVSSSAENTRQNGSN. Phosphoserine occurs at positions 155 and 158. Position 159 is a phosphothreonine (Thr159). Phosphoserine occurs at positions 165, 167, 176, 179, and 183. Basic and acidic residues predominate over residues 178–202; that stretch reads DSDRYSDNDEDSKIELKLEKREPLK. Lys206 is modified (N6-acetyllysine). Residues 298 to 370 form a binds lamins B region; it reads TGNFKHASSI…SCRRPIKGAA (73 aa). The segment at 299 to 373 is NAKAP95-binding C; sequence GNFKHASSIL…RPIKGAAGRP (75 aa). A phosphoserine mark is found at Ser305, Ser306, and Ser361. Lys388 is subject to N6-acetyllysine. A helical; Signal-anchor for type II membrane protein transmembrane segment spans residues 410–430; sequence VPMWIKMLLFALVAGFLFLVY. Residues 431–452 are Lumenal-facing; the sequence is QAMETNQGNPFTNFLQDTKISN.

The protein belongs to the LEM family. Interacts with LMNB1, LMNB2, BANF1, AKAP8L, GMCL and chromosomes. In terms of processing, mitosis-specific phosphorylation specifically abolishes its binding to lamin B and chromosomes.

The protein resides in the nucleus inner membrane. It is found in the chromosome. Its function is as follows. Binds directly to lamin B1 and chromosomes in a mitotic phosphorylation-regulated manner. May play an important role in nuclear envelope reassembly at the end of mitosis and/or anchoring of the nuclear lamina and interphase chromosomes to the nuclear envelope. The protein is Lamina-associated polypeptide 2, isoform beta (Tmpo) of Rattus norvegicus (Rat).